The chain runs to 450 residues: Glucose-6-phosphate isomerase (450 aa).

E290 (proton donor) is an active-site residue. Catalysis depends on residues H311 and K425.

It belongs to the GPI family.

It localises to the cytoplasm. It carries out the reaction alpha-D-glucose 6-phosphate = beta-D-fructose 6-phosphate. It participates in carbohydrate biosynthesis; gluconeogenesis. It functions in the pathway carbohydrate degradation; glycolysis; D-glyceraldehyde 3-phosphate and glycerone phosphate from D-glucose: step 2/4. Functionally, catalyzes the reversible isomerization of glucose-6-phosphate to fructose-6-phosphate. The sequence is that of Glucose-6-phosphate isomerase from Alkaliphilus metalliredigens (strain QYMF).